The following is a 393-amino-acid chain: Short-chain dehydrogenase/reductase family 42E member 1 (393 aa).

Residue tyrosine 152 is the Proton acceptor of the active site. Residue lysine 156 participates in NAD(+) binding. Transmembrane regions (helical) follow at residues 282-302 (LPLT…FILG) and 371-391 (GLLV…SVIL).

Belongs to the 3-beta-HSD family.

It localises to the membrane. This chain is Short-chain dehydrogenase/reductase family 42E member 1 (SDR42E1), found in Macaca fascicularis (Crab-eating macaque).